The primary structure comprises 159 residues: CASP-like protein 1C1 (159 aa).

Residues 1 to 6 (MAKIKR) lie on the Cytoplasmic side of the membrane. A helical transmembrane segment spans residues 7–27 (IITTLVRLLVLGAALSATIVM). Topologically, residues 28-50 (VTSHDSAEVLNLSFDAKYTNARA) are extracellular. Residue N38 is glycosylated (N-linked (GlcNAc...) asparagine). The helical transmembrane segment at 51–73 (FVYFAITNAIASGYSFIALFLSF) threads the bilayer. Topologically, residues 74-86 (STPLWHLVFLLDV) are cytoplasmic. Residues 87-107 (FMTLLLTSSISVALAIADVGK) traverse the membrane as a helical segment. Over 108–130 (KGNSHAGWLPVCGQVPEFCDHVT) the chain is Extracellular. A helical transmembrane segment spans residues 131–151 (GALIAGFSAAVLYLVLLLFSI). Over 152-159 (HAVLNPKP) the chain is Cytoplasmic.

The protein belongs to the Casparian strip membrane proteins (CASP) family. Homodimer and heterodimers.

It is found in the cell membrane. This is CASP-like protein 1C1 from Vitis vinifera (Grape).